A 227-amino-acid chain; its full sequence is Cytochrome c oxidase subunit 2 (227 aa).

Residues 1–14 (MAYPFQLGFQDATS) are Mitochondrial intermembrane-facing. The helical transmembrane segment at 15–45 (PIMEELLHFHDHTLMIVFLISSLVLYIISSM) threads the bilayer. Residues 46-59 (LTTKLTHTSTMDAQ) are Mitochondrial matrix-facing. The helical transmembrane segment at 60–87 (EVETIWTILPAIILILIALPSLRILYMM) threads the bilayer. Over 88–227 (DEINNPSLTV…YFEEWSASML (140 aa)) the chain is Mitochondrial intermembrane. H161, C196, E198, C200, H204, and M207 together coordinate Cu cation. E198 serves as a coordination point for Mg(2+).

The protein belongs to the cytochrome c oxidase subunit 2 family. As to quaternary structure, component of the cytochrome c oxidase (complex IV, CIV), a multisubunit enzyme composed of 14 subunits. The complex is composed of a catalytic core of 3 subunits MT-CO1, MT-CO2 and MT-CO3, encoded in the mitochondrial DNA, and 11 supernumerary subunits COX4I, COX5A, COX5B, COX6A, COX6B, COX6C, COX7A, COX7B, COX7C, COX8 and NDUFA4, which are encoded in the nuclear genome. The complex exists as a monomer or a dimer and forms supercomplexes (SCs) in the inner mitochondrial membrane with NADH-ubiquinone oxidoreductase (complex I, CI) and ubiquinol-cytochrome c oxidoreductase (cytochrome b-c1 complex, complex III, CIII), resulting in different assemblies (supercomplex SCI(1)III(2)IV(1) and megacomplex MCI(2)III(2)IV(2)). Found in a complex with TMEM177, COA6, COX18, COX20, SCO1 and SCO2. Interacts with TMEM177 in a COX20-dependent manner. Interacts with COX20. Interacts with COX16. It depends on Cu cation as a cofactor.

The protein resides in the mitochondrion inner membrane. It carries out the reaction 4 Fe(II)-[cytochrome c] + O2 + 8 H(+)(in) = 4 Fe(III)-[cytochrome c] + 2 H2O + 4 H(+)(out). Functionally, component of the cytochrome c oxidase, the last enzyme in the mitochondrial electron transport chain which drives oxidative phosphorylation. The respiratory chain contains 3 multisubunit complexes succinate dehydrogenase (complex II, CII), ubiquinol-cytochrome c oxidoreductase (cytochrome b-c1 complex, complex III, CIII) and cytochrome c oxidase (complex IV, CIV), that cooperate to transfer electrons derived from NADH and succinate to molecular oxygen, creating an electrochemical gradient over the inner membrane that drives transmembrane transport and the ATP synthase. Cytochrome c oxidase is the component of the respiratory chain that catalyzes the reduction of oxygen to water. Electrons originating from reduced cytochrome c in the intermembrane space (IMS) are transferred via the dinuclear copper A center (CU(A)) of subunit 2 and heme A of subunit 1 to the active site in subunit 1, a binuclear center (BNC) formed by heme A3 and copper B (CU(B)). The BNC reduces molecular oxygen to 2 water molecules using 4 electrons from cytochrome c in the IMS and 4 protons from the mitochondrial matrix. This Equus asinus (Donkey) protein is Cytochrome c oxidase subunit 2 (MT-CO2).